The following is a 126-amino-acid chain: Large ribosomal subunit protein bL17 (126 aa).

The protein belongs to the bacterial ribosomal protein bL17 family. As to quaternary structure, part of the 50S ribosomal subunit. Contacts protein L32.

The polypeptide is Large ribosomal subunit protein bL17 (Aliivibrio salmonicida (strain LFI1238) (Vibrio salmonicida (strain LFI1238))).